A 424-amino-acid polypeptide reads, in one-letter code: Spermatogenesis-associated protein 2-like protein (424 aa).

Disordered stretches follow at residues 233–258 and 273–300; these read EDEG…AELA and TGGR…EEGL. Residue serine 327 is modified to Phosphoserine.

Belongs to the SPATA2 family.

The polypeptide is Spermatogenesis-associated protein 2-like protein (Homo sapiens (Human)).